Here is a 130-residue protein sequence, read N- to C-terminus: MSMQDPIADMLTRIRNGQAANKVAINMPSSKLKVAIANVLAAEGYIESVKVLEGAKPELEITLKYFQGKPVVESIQRVSRPGLRIYKRKDELPKVMGGLGVAVISTSKGVMTDRAARQAGLGGEIICYVA.

The protein belongs to the universal ribosomal protein uS8 family. As to quaternary structure, part of the 30S ribosomal subunit. Contacts proteins S5 and S12.

Functionally, one of the primary rRNA binding proteins, it binds directly to 16S rRNA central domain where it helps coordinate assembly of the platform of the 30S subunit. The protein is Small ribosomal subunit protein uS8 of Haemophilus influenzae (strain 86-028NP).